A 448-amino-acid polypeptide reads, in one-letter code: Senescence/dehydration-associated protein At4g35985, chloroplastic (448 aa).

Residues 1–36 (MECSATPPKLYPTVDTSTTVAPLPKSSSSSSSTNNN) are disordered. Residues 1-56 (MECSATPPKLYPTVDTSTTVAPLPKSSSSSSSTNNNNLYPSINVNDLVNNIFPDPT) constitute a chloroplast transit peptide. The segment covering 26–36 (SSSSSSSTNNN) has biased composition (low complexity). Positions 248–416 (IAAGSGQLIK…AWTVFKIRQA (169 aa)) constitute a Senescence domain. Residues 422-448 (AMKPSSLAKTVVKTAAKERKKGKKSSK) form a disordered region. The span at 439 to 448 (ERKKGKKSSK) shows a compositional bias: basic residues.

As to expression, expressed in leaves (especially in midribs and trichomes), apical meristemic regions, stems, roots and flowers.

The protein resides in the plastid. It is found in the chloroplast. This Arabidopsis thaliana (Mouse-ear cress) protein is Senescence/dehydration-associated protein At4g35985, chloroplastic.